The following is a 1291-amino-acid chain: Period circadian protein homolog 1 (1291 aa).

The tract at residues 1-134 is disordered; that stretch reads MSGPLEGADG…SSEQSARART (134 aa). Positions 1–151 are interaction with BTRC; sequence MSGPLEGADG…LRELKLRLPP (151 aa). Residues 48 to 115 show a composition bias toward low complexity; that stretch reads NSNGSSGNES…AYSLLSASSE (68 aa). Polar residues predominate over residues 116–132; that stretch reads QDNPSTSGCSSEQSARA. The residue at position 121 (T121) is a Phosphothreonine; by CSNK1E. Phosphoserine; by CSNK1E is present on residues S122 and S126. The Nuclear export signal 1 motif lies at 138-147; the sequence is LMTALRELKL. PAS domains follow at residues 208–275 and 348–414; these read ITSE…PSRL and YEAP…KILQ. One can recognise a PAC domain in the interval 422–465; that stretch reads HSPIRFCARNGEYVTMDTSWAGFVHPWSRKVAFVLGRHKVRTAP. The short motif at 489–498 is the Nuclear export signal 2 element; sequence LSEQIHRLLL. Disordered stretches follow at residues 508 to 544 and 647 to 698; these read GLCG…PAPV and TKRK…KEPV. Composition is skewed to low complexity over residues 513-533 and 652-662; these read GPLM…SNGG and ASSSSYTASSA. Residues 596–815 are required for phosphorylation by CSNK1E; the sequence is ELEVAPVPDQ…GLDTSSVAPS (220 aa). Phosphoserine is present on residues S661, S663, and S704. Disordered stretches follow at residues 749-772, 809-873, and 938-1037; these read GLAP…TPDA, TSSV…PPAT, and SQAP…ALSG. The span at 751 to 769 shows a compositional bias: pro residues; sequence APGPAPSPAPSPTVAPDPT. Residue S815 is modified to Phosphoserine. Residues 824-840 carry the Nuclear localization signal motif; that stretch reads IPPGRRHHCRSKAKRSR. The segment covering 827-846 has biased composition (basic residues); that stretch reads GRRHHCRSKAKRSRHHHHQT. Composition is skewed to pro residues over residues 859 to 873 and 955 to 965; these read SPVP…PPAT and PSLPPPPLSPP. Positions 973–985 are enriched in polar residues; it reads FNSRCSSPLQLNL. Residues S978 and S979 each carry the phosphoserine modification. A Nuclear export signal 3 motif is present at residues 981–988; sequence LQLNLLQL. The short motif at 1042–1046 is the LXXLL element; the sequence is LELLL. Over residues 1051–1061 the composition is skewed to low complexity; it reads RSGTGSAASGS. Disordered stretches follow at residues 1051 to 1099 and 1207 to 1291; these read RSGT…YFGS and SVQD…NSTS. A compositionally biased stretch (gly residues) spans 1062–1076; it reads LGSGLGSGSGSGSHE. The span at 1077–1094 shows a compositional bias: low complexity; the sequence is GGSTSASITRSSQSSHTS. Positions 1148–1291 are CRY binding domain; that stretch reads SRDAASVLKQ…ALPAEENSTS (144 aa). Residues 1235 to 1248 show a composition bias toward gly residues; sequence GEGGGCGVGGGGGD. The span at 1253-1267 shows a compositional bias: polar residues; the sequence is AQTQIGAKGSSSQDS.

Homodimer. Component of the circadian core oscillator, which includes the CRY proteins, CLOCK or NPAS2, BMAL1 or BMAL2, CSNK1D and/or CSNK1E, TIMELESS, and the PER proteins. Interacts directly with TIMELESS. Interacts directly with PER2, PER3, CRY1 and CRY2. Interacts with BMAL1 and CLOCK. Interacts with GPRASP1. Interacts (phosphorylated) with BTRC and FBXW11; the interactions trigger proteasomal degradation. Interacts with NONO and SFPQ. Interacts with WDR5. Interacts with U2AF1L4 (Isoform 3). Interacts with USP2. Interacts with HNF4A. Post-translationally, phosphorylated on serine residues by CSNK1D, CSNK1E and probably also by CSNK1G2. Phosphorylation by CSNK1D or CSNK1E promotes nuclear location of PER proteins as well as ubiquitination and subsequent degradation. May be dephosphorylated by PP1. In terms of processing, ubiquitinated; requires phosphorylation by CSNK1E and interaction with BTRC and FBXW11. Deubiquitinated by USP2. As to expression, in brain, highest expression is observed in the SCN. Highly expressed in the pyramidal cell layer of the piriform cortex, the periventricular part of the caudate-putamen, many thalamic nuclei, and the granular layer of the cerebellar cortex. Weaker expression is detected in most area of the brain, including cortical and non cortical structures. Expression but no oscillations occurs in the glomerular and mitral cell layers of the olfactory bulb, the internal granular layer of the cerebellum, the cornu ammonis and dentate gyrus of the hippocampus, the cerebral and piriform cortices. Expressed in the renal cortex (at protein level). Also found in heart, brain, bladder, lumbar spinal cord, spleen, lung, liver, skeletal muscle and testis.

The protein localises to the nucleus. It is found in the cytoplasm. Transcriptional repressor which forms a core component of the circadian clock. The circadian clock, an internal time-keeping system, regulates various physiological processes through the generation of approximately 24 hour circadian rhythms in gene expression, which are translated into rhythms in metabolism and behavior. It is derived from the Latin roots 'circa' (about) and 'diem' (day) and acts as an important regulator of a wide array of physiological functions including metabolism, sleep, body temperature, blood pressure, endocrine, immune, cardiovascular, and renal function. Consists of two major components: the central clock, residing in the suprachiasmatic nucleus (SCN) of the brain, and the peripheral clocks that are present in nearly every tissue and organ system. Both the central and peripheral clocks can be reset by environmental cues, also known as Zeitgebers (German for 'timegivers'). The predominant Zeitgeber for the central clock is light, which is sensed by retina and signals directly to the SCN. The central clock entrains the peripheral clocks through neuronal and hormonal signals, body temperature and feeding-related cues, aligning all clocks with the external light/dark cycle. Circadian rhythms allow an organism to achieve temporal homeostasis with its environment at the molecular level by regulating gene expression to create a peak of protein expression once every 24 hours to control when a particular physiological process is most active with respect to the solar day. Transcription and translation of core clock components (CLOCK, NPAS2, BMAL1, BMAL2, PER1, PER2, PER3, CRY1 and CRY2) plays a critical role in rhythm generation, whereas delays imposed by post-translational modifications (PTMs) are important for determining the period (tau) of the rhythms (tau refers to the period of a rhythm and is the length, in time, of one complete cycle). A diurnal rhythm is synchronized with the day/night cycle, while the ultradian and infradian rhythms have a period shorter and longer than 24 hours, respectively. Disruptions in the circadian rhythms contribute to the pathology of cardiovascular diseases, cancer, metabolic syndromes and aging. A transcription/translation feedback loop (TTFL) forms the core of the molecular circadian clock mechanism. Transcription factors, CLOCK or NPAS2 and BMAL1 or BMAL2, form the positive limb of the feedback loop, act in the form of a heterodimer and activate the transcription of core clock genes and clock-controlled genes (involved in key metabolic processes), harboring E-box elements (5'-CACGTG-3') within their promoters. The core clock genes: PER1/2/3 and CRY1/2 which are transcriptional repressors form the negative limb of the feedback loop and interact with the CLOCK|NPAS2-BMAL1|BMAL2 heterodimer inhibiting its activity and thereby negatively regulating their own expression. This heterodimer also activates nuclear receptors NR1D1/2 and RORA/B/G, which form a second feedback loop and which activate and repress BMAL1 transcription, respectively. Regulates circadian target genes expression at post-transcriptional levels, but may not be required for the repression at transcriptional level. Controls PER2 protein decay. Represses CRY2 preventing its repression on CLOCK/BMAL1 target genes such as FXYD5 and SCNN1A in kidney and PPARA in liver. Besides its involvement in the maintenance of the circadian clock, has an important function in the regulation of several processes. Participates in the repression of glucocorticoid receptor NR3C1/GR-induced transcriptional activity by reducing the association of NR3C1/GR to glucocorticoid response elements (GREs) by BMAL1:CLOCK. Plays a role in the modulation of the neuroinflammatory state via the regulation of inflammatory mediators release, such as CCL2 and IL6. In spinal astrocytes, negatively regulates the MAPK14/p38 and MAPK8/JNK MAPK cascades as well as the subsequent activation of NFkappaB. Coordinately regulates the expression of multiple genes that are involved in the regulation of renal sodium reabsorption. Can act as gene expression activator in a gene and tissue specific manner, in kidney enhances WNK1 and SLC12A3 expression in collaboration with CLOCK. Modulates hair follicle cycling. Represses the CLOCK-BMAL1 induced transcription of BHLHE40/DEC1. The polypeptide is Period circadian protein homolog 1 (Per1) (Mus musculus (Mouse)).